The primary structure comprises 329 residues: MASQLTDAFARKFYYLRLSITDVCNFRCTYCLPNGYKPGAVNNNGFLSVDEVRRVTRAFSALGTEKVRLTGGEPSLRRDFTEIIAAVRENPAIRQIAVTTNGYRLARDVERWRDAGLTAINVSVDSLDARQFHAITGQDKFHQVMDGIDAAFAAGFDKVKVNTVLMRDVNHHQLDTFLAWIQPRRIQLRFIELMETGEGSDLFRRHHLSGMVLRDELLRRGWIHQIRQRSDGPAQVFCHPDYAGEIGLIMPYEKDFCATCNRLRVSSVGKLHLCLFGEGGVDLRDLMAEDRQQAALEARIAEALTHKKQTHFLHQGNTGITQNLSYIGG.

The Radical SAM core domain occupies 8–234; sequence AFARKFYYLR…QIRQRSDGPA (227 aa). A GTP-binding site is contributed by Arg-17. Positions 24 and 28 each coordinate [4Fe-4S] cluster. Residue Tyr-30 participates in S-adenosyl-L-methionine binding. Position 31 (Cys-31) interacts with [4Fe-4S] cluster. Arg-68 contributes to the GTP binding site. Residue Gly-72 coordinates S-adenosyl-L-methionine. Residue Thr-99 coordinates GTP. S-adenosyl-L-methionine is bound at residue Ser-123. Lys-160 contributes to the GTP binding site. Residue Met-194 coordinates S-adenosyl-L-methionine. Cys-257 and Cys-260 together coordinate [4Fe-4S] cluster. Residue 262–264 coordinates GTP; the sequence is RLR. A [4Fe-4S] cluster-binding site is contributed by Cys-274.

This sequence belongs to the radical SAM superfamily. MoaA family. As to quaternary structure, monomer and homodimer. [4Fe-4S] cluster serves as cofactor.

It carries out the reaction GTP + AH2 + S-adenosyl-L-methionine = (8S)-3',8-cyclo-7,8-dihydroguanosine 5'-triphosphate + 5'-deoxyadenosine + L-methionine + A + H(+). The protein operates within cofactor biosynthesis; molybdopterin biosynthesis. Functionally, catalyzes the cyclization of GTP to (8S)-3',8-cyclo-7,8-dihydroguanosine 5'-triphosphate. This Klebsiella pneumoniae subsp. pneumoniae (strain ATCC 700721 / MGH 78578) protein is GTP 3',8-cyclase.